The sequence spans 590 residues: Beta-fructofuranosidase, insoluble isoenzyme CWINV2 (590 aa).

The first 25 residues, 1–25 (MSAPKFGYVLLLIVLINISNNGVDA), serve as a signal peptide directing secretion. Substrate contacts are provided by residues 59–62 (WIND), Q78, and W86. The active site involves D62. N-linked (GlcNAc...) asparagine glycosylation occurs at N118. 121 to 122 (WS) contributes to the substrate binding site. Residues N143 and N180 are each glycosylated (N-linked (GlcNAc...) asparagine). Substrate contacts are provided by residues 185–186 (RD), E241, and D275. N-linked (GlcNAc...) asparagine glycosylation is present at N335. C435 and C483 are disulfide-bonded. N-linked (GlcNAc...) asparagine glycosylation is present at N564.

Belongs to the glycosyl hydrolase 32 family. Expressed in flowers, and seeds.

Its subcellular location is the secreted. The protein resides in the extracellular space. It is found in the apoplast. It localises to the cell wall. It carries out the reaction Hydrolysis of terminal non-reducing beta-D-fructofuranoside residues in beta-D-fructofuranosides.. The polypeptide is Beta-fructofuranosidase, insoluble isoenzyme CWINV2 (CWINV2) (Arabidopsis thaliana (Mouse-ear cress)).